Here is a 265-residue protein sequence, read N- to C-terminus: Hydroxyethylthiazole kinase (265 aa).

Methionine 55 contacts substrate. Arginine 130 and serine 176 together coordinate ATP. Glycine 203 contacts substrate.

This sequence belongs to the Thz kinase family. Mg(2+) serves as cofactor.

It carries out the reaction 5-(2-hydroxyethyl)-4-methylthiazole + ATP = 4-methyl-5-(2-phosphooxyethyl)-thiazole + ADP + H(+). It participates in cofactor biosynthesis; thiamine diphosphate biosynthesis; 4-methyl-5-(2-phosphoethyl)-thiazole from 5-(2-hydroxyethyl)-4-methylthiazole: step 1/1. Its function is as follows. Catalyzes the phosphorylation of the hydroxyl group of 4-methyl-5-beta-hydroxyethylthiazole (THZ). This is Hydroxyethylthiazole kinase from Leptospira interrogans serogroup Icterohaemorrhagiae serovar copenhageni (strain Fiocruz L1-130).